Reading from the N-terminus, the 358-residue chain is MQNTTLFILATLLIFCPFFTASAWSVNNFLMTGPKAYLTYSASVAVGAQNGIEECKYQFAWERWNCPESTLQLATHNGLRSATRETSFVHAISSAGVMYTLTRNCSMGDFDNCGCDDSRNGRIGGRGWVWGGCSDNAEFGERISKLFVDGLETGQDARALMNLHNNEAGRLAVKETMKRTCKCHGISGSCSIQTCWLQLAEFRDIGNHLKIKHDQALKLEMDKRKMRSGNSADNRGAIADAFSSVAGSELIFLEDSPDYCLKNISLGLQGTEGRECLQSGKNLSQWERRSCKRLCTDCGLRVEEKKTEIISSCNCKFHWCCTVKCEQCKQVVIKHFCARRERDSNMLNTKRKNRGHRR.

The first 22 residues, 1 to 22 (MQNTTLFILATLLIFCPFFTAS), serve as a signal peptide directing secretion. Cysteines 55 and 66 form a disulfide. Asn104 is a glycosylation site (N-linked (GlcNAc...) asparagine). Cystine bridges form between Cys105–Cys113, Cys115–Cys133, Cys181–Cys195, Cys183–Cys190, Cys260–Cys298, Cys276–Cys291, Cys295–Cys337, Cys313–Cys328, Cys315–Cys325, and Cys320–Cys321. Residue Ser187 is the site of O-palmitoleoyl serine attachment. N-linked (GlcNAc...) asparagine glycans are attached at residues Asn263 and Asn282.

The protein belongs to the Wnt family. As to quaternary structure, homooligomer; disulfide-linked, leading to inactivation. Interacts with the long chain of cer1. Palmitoleoylation is required for efficient binding to frizzled receptors. Depalmitoleoylation leads to Wnt signaling pathway inhibition. Post-translationally, proteolytic processing by tiki1 and tiki2 promotes oxidation and formation of large disulfide-bond oligomers, leading to inactivation of wnt8.

The protein resides in the secreted. It is found in the extracellular space. Its subcellular location is the extracellular matrix. In terms of biological role, ligand for members of the frizzled family of seven transmembrane receptors. Plays a role in ventral mesodermal patterning during embryogenesis. Mimics Nieuwkoop center activity. Causes dorsal mesodermal differentiation of animal cap ectoderm when coexpressed with noggin and nuclear, sequence-specific DNA-binding protein xBra. None of these molecules causes dorsal mesoderm formation when expressed alone. The sequence is that of Protein Wnt-8 (wnt8) from Xenopus laevis (African clawed frog).